A 337-amino-acid polypeptide reads, in one-letter code: MKKWLFPFAFVATLAGCSVSNESKQQANDTYQKSDAALPLFAPLNTAGVSLPKQDTTYQLPQVKVKKADQVDIRPPETPLAIIQNSIAQFDGERALIAYPIDKREVYNLQQVARLLKEQGIGYQLTNEKIVTDWAPTGRADEIGDTQVRYEIEQVSSGNYSALFVSILQMKRNEVVFSPHLADKQRYSSDRLNQLVGELDASYRKQVRDLNNSGLMPIQSVLGTDSNGRTALVLGAPFNHAWTKLGQVLPQLEFDIKDEIIGRGVRELKYRPAGAKSWWWPFGRAEGSSGLKTGTYFMQLSALGKQSAVVMTDDDGNALSGEQAQALYQALQNLLAK.

The N-terminal stretch at Met-1–Gly-16 is a signal peptide. Cys-17 carries N-palmitoyl cysteine lipidation. Cys-17 carries S-diacylglycerol cysteine lipidation.

Belongs to the BamC family. As to quaternary structure, part of the Bam complex.

The protein localises to the cell outer membrane. Its function is as follows. Part of the outer membrane protein assembly complex, which is involved in assembly and insertion of beta-barrel proteins into the outer membrane. The chain is Outer membrane protein assembly factor BamC from Pasteurella multocida (strain Pm70).